The sequence spans 331 residues: Probable cytosolic iron-sulfur protein assembly protein Ciao1 (331 aa).

7 WD repeats span residues 12–51, 57–96, 97–136, 142–181, 188–227, 246–285, and 297–331; these read GHKG…WTTK, GHKR…ATLE, GHEN…EFEC, AHSQ…SDWD, SHTS…NDAG, EHSR…KRDA, and AHEQ…KLQE.

Belongs to the WD repeat CIA1 family.

In terms of biological role, essential component of the cytosolic iron-sulfur (Fe/S) protein assembly machinery. Required for the maturation of extramitochondrial Fe/S proteins. In Drosophila virilis (Fruit fly), this protein is Probable cytosolic iron-sulfur protein assembly protein Ciao1.